The following is a 296-amino-acid chain: NAD kinase (296 aa).

Residue D72 is the Proton acceptor of the active site. NAD(+)-binding positions include 72–73 (DG), 146–147 (ND), R157, R174, D176, 187–192 (TAYALS), and Q247.

Belongs to the NAD kinase family. It depends on a divalent metal cation as a cofactor.

It is found in the cytoplasm. The catalysed reaction is NAD(+) + ATP = ADP + NADP(+) + H(+). Functionally, involved in the regulation of the intracellular balance of NAD and NADP, and is a key enzyme in the biosynthesis of NADP. Catalyzes specifically the phosphorylation on 2'-hydroxyl of the adenosine moiety of NAD to yield NADP. The protein is NAD kinase of Hahella chejuensis (strain KCTC 2396).